The following is a 354-amino-acid chain: Thiamine thiazole synthase 1, chloroplastic (354 aa).

A chloroplast-targeting transit peptide spans 1-45 (MATAAASSLLKSSFAGSRLPAATRTTPASLVVATGPRGAGAGPIC). Substrate-binding positions include Ala100, 120-121 (EQ), Gly128, and Val193. Cys222 is modified (2,3-didehydroalanine (Cys)). Substrate is bound by residues Asp224, His239, Met291, and 301 to 303 (RMG).

It belongs to the THI4 family. As to quaternary structure, homooctamer. The cofactor is Fe cation. In terms of processing, during the catalytic reaction, a sulfide is transferred from Cys-222 to a reaction intermediate, generating a dehydroalanine residue. Highest expression in developing embryos and green leaves and a very low level expression seen in endosperm, roots, etiolated shoots and immature ears.

The protein localises to the plastid. It is found in the chloroplast. It carries out the reaction [ADP-thiazole synthase]-L-cysteine + glycine + NAD(+) = [ADP-thiazole synthase]-dehydroalanine + ADP-5-ethyl-4-methylthiazole-2-carboxylate + nicotinamide + 3 H2O + 2 H(+). Functionally, involved in biosynthesis of the thiamine precursor thiazole. Catalyzes the conversion of NAD and glycine to adenosine diphosphate 5-(2-hydroxyethyl)-4-methylthiazole-2-carboxylic acid (ADT), an adenylated thiazole intermediate. The reaction includes an iron-dependent sulfide transfer from a conserved cysteine residue of the protein to a thiazole intermediate. The enzyme can only undergo a single turnover, which suggests it is a suicide enzyme. May have additional roles in adaptation to various stress conditions and in DNA damage tolerance. This chain is Thiamine thiazole synthase 1, chloroplastic, found in Zea mays (Maize).